The sequence spans 254 residues: MRGFFGKAIFVVLAVFIMMPLLGIEAVRASELQQHVYDRAHLLSKAEIGKLESLSAKLGAKRDTDFIIITTKSTNGEDIADYTGDFYDRYGKGSTAILTIDMTNREVFIAGFKKAEQYLDNSRLNSIRNTISSDLSNENYFEAFETYIQLSYKDMGIKPGVNPDNIFFTWWFQLIAAIAVGGIAVSIMLYHAGGKVTVNGSTYMDQRTSDVIDQYDTYIRTTVTRERKPSDKDSGSDGGVTKGGTSYSGSRGSF.

The N-terminal stretch at 1–29 is a signal peptide; sequence MRGFFGKAIFVVLAVFIMMPLLGIEAVRA. A helical transmembrane segment spans residues 166–186; sequence IFFTWWFQLIAAIAVGGIAVS. Over residues 223 to 235 the composition is skewed to basic and acidic residues; it reads VTRERKPSDKDSG. The disordered stretch occupies residues 223–254; it reads VTRERKPSDKDSGSDGGVTKGGTSYSGSRGSF. A compositionally biased stretch (polar residues) spans 243–254; the sequence is GGTSYSGSRGSF.

The protein belongs to the UPF0603 family.

Its subcellular location is the cell membrane. The protein is UPF0603 protein YdjH (ydjH) of Bacillus subtilis (strain 168).